The primary structure comprises 262 residues: MQTIIRVEKLAKTFNQHQALHAVDLNIHHSEMVALLGPSGSGKSTLLRHLSGLITGDKSAGSHIELLGRTVQREGRLARDIRKSRANTGYIFQQFNLVNRLSVLENVLIGALGSTPFWRTCFSWFTGEQKQRALQALTRVGMVHFAHQRVSTLSGGQQQRVAIARALMQQAKVILADEPIASLDPESARIVMDTLRDINQNDGITVVVTLHQVDYALRYCERIVALRQGHVFYDGSSQLFDNERFDHLYRSINRIEENAKAA.

Residues 5-253 enclose the ABC transporter domain; that stretch reads IRVEKLAKTF…RFDHLYRSIN (249 aa). 37–44 provides a ligand contact to ATP; it reads GPSGSGKS.

This sequence belongs to the ABC transporter superfamily. Phosphonates importer (TC 3.A.1.9.1) family. The complex is composed of two ATP-binding proteins (PhnC), two transmembrane proteins (PhnE) and a solute-binding protein (PhnD).

It is found in the cell inner membrane. The enzyme catalyses phosphonate(out) + ATP + H2O = phosphonate(in) + ADP + phosphate + H(+). Part of the ABC transporter complex PhnCDE involved in phosphonates import. Responsible for energy coupling to the transport system. The protein is Phosphonates import ATP-binding protein PhnC of Shigella flexneri serotype 5b (strain 8401).